The primary structure comprises 497 residues: Galactose-1-phosphate uridylyltransferase (497 aa).

This sequence belongs to the galactose-1-phosphate uridylyltransferase type 2 family.

It localises to the cytoplasm. It catalyses the reaction alpha-D-galactose 1-phosphate + UDP-alpha-D-glucose = alpha-D-glucose 1-phosphate + UDP-alpha-D-galactose. It functions in the pathway carbohydrate metabolism; galactose metabolism. This chain is Galactose-1-phosphate uridylyltransferase, found in Enterococcus faecalis (strain ATCC 700802 / V583).